Here is a 141-residue protein sequence, read N- to C-terminus: uncharacterized protein (141 aa).

2 consecutive transmembrane segments (helical) span residues 20-42 and 52-74; these read FLVNLPVVICLAAYLVSQVFCLA and LHLCTFFTFFTSFLLVPLAIFTL.

Its subcellular location is the cell membrane. This is an uncharacterized protein from Archaeoglobus fulgidus (strain ATCC 49558 / DSM 4304 / JCM 9628 / NBRC 100126 / VC-16).